A 616-amino-acid chain; its full sequence is Dihydroxy-acid dehydratase (616 aa).

Residue aspartate 81 coordinates Mg(2+). Cysteine 122 provides a ligand contact to [2Fe-2S] cluster. Mg(2+) is bound by residues aspartate 123 and lysine 124. Lysine 124 carries the N6-carboxylysine modification. Cysteine 195 contributes to the [2Fe-2S] cluster binding site. Glutamate 491 contacts Mg(2+). Serine 517 serves as the catalytic Proton acceptor.

The protein belongs to the IlvD/Edd family. In terms of assembly, homodimer. [2Fe-2S] cluster is required as a cofactor. It depends on Mg(2+) as a cofactor.

The enzyme catalyses (2R)-2,3-dihydroxy-3-methylbutanoate = 3-methyl-2-oxobutanoate + H2O. It carries out the reaction (2R,3R)-2,3-dihydroxy-3-methylpentanoate = (S)-3-methyl-2-oxopentanoate + H2O. The protein operates within amino-acid biosynthesis; L-isoleucine biosynthesis; L-isoleucine from 2-oxobutanoate: step 3/4. Its pathway is amino-acid biosynthesis; L-valine biosynthesis; L-valine from pyruvate: step 3/4. In terms of biological role, functions in the biosynthesis of branched-chain amino acids. Catalyzes the dehydration of (2R,3R)-2,3-dihydroxy-3-methylpentanoate (2,3-dihydroxy-3-methylvalerate) into 2-oxo-3-methylpentanoate (2-oxo-3-methylvalerate) and of (2R)-2,3-dihydroxy-3-methylbutanoate (2,3-dihydroxyisovalerate) into 2-oxo-3-methylbutanoate (2-oxoisovalerate), the penultimate precursor to L-isoleucine and L-valine, respectively. The protein is Dihydroxy-acid dehydratase of Shewanella loihica (strain ATCC BAA-1088 / PV-4).